Consider the following 66-residue polypeptide: Surface composition regulator (66 aa).

It belongs to the GlgS family.

Functionally, major determinant of cell surface composition. Negatively regulates motility, adhesion and synthesis of biofilm exopolysaccharides. In Escherichia coli O127:H6 (strain E2348/69 / EPEC), this protein is Surface composition regulator.